A 390-amino-acid polypeptide reads, in one-letter code: Glutamate 5-kinase (390 aa).

K29 contributes to the ATP binding site. The substrate site is built by S69, D156, and N168. ATP is bound at residue 188-189 (TD). In terms of domain architecture, PUA spans 295–374 (SGSLIVDAGA…EQFDRILGNN (80 aa)).

Belongs to the glutamate 5-kinase family.

It localises to the cytoplasm. It carries out the reaction L-glutamate + ATP = L-glutamyl 5-phosphate + ADP. It participates in amino-acid biosynthesis; L-proline biosynthesis; L-glutamate 5-semialdehyde from L-glutamate: step 1/2. Catalyzes the transfer of a phosphate group to glutamate to form L-glutamate 5-phosphate. The polypeptide is Glutamate 5-kinase (Psychrobacter arcticus (strain DSM 17307 / VKM B-2377 / 273-4)).